The sequence spans 399 residues: Elongation factor Tu (399 aa).

The tr-type G domain maps to 10 to 209 (KPHVNIGTIG…AVDEYIPTPE (200 aa)). The segment at 19–26 (GHVDHGKT) is G1. 19–26 (GHVDHGKT) provides a ligand contact to GTP. Residue T26 coordinates Mg(2+). The G2 stretch occupies residues 60-64 (GITIA). The tract at residues 81-84 (DCPG) is G3. Residues 81 to 85 (DCPGH) and 136 to 139 (NKED) each bind GTP. Residues 136–139 (NKED) form a G4 region. Residues 174-176 (SAL) form a G5 region.

It belongs to the TRAFAC class translation factor GTPase superfamily. Classic translation factor GTPase family. EF-Tu/EF-1A subfamily. As to quaternary structure, monomer.

The protein localises to the cytoplasm. The enzyme catalyses GTP + H2O = GDP + phosphate + H(+). Its function is as follows. GTP hydrolase that promotes the GTP-dependent binding of aminoacyl-tRNA to the A-site of ribosomes during protein biosynthesis. This is Elongation factor Tu from Nitratiruptor sp. (strain SB155-2).